Here is a 64-residue protein sequence, read N- to C-terminus: DNA-directed RNA polymerase subunit omega (64 aa).

Belongs to the RNA polymerase subunit omega family. The RNAP catalytic core consists of 2 alpha, 1 beta, 1 beta' and 1 omega subunit. When a sigma factor is associated with the core the holoenzyme is formed, which can initiate transcription.

The enzyme catalyses RNA(n) + a ribonucleoside 5'-triphosphate = RNA(n+1) + diphosphate. Functionally, promotes RNA polymerase assembly. Latches the N- and C-terminal regions of the beta' subunit thereby facilitating its interaction with the beta and alpha subunits. This chain is DNA-directed RNA polymerase subunit omega, found in Oceanobacillus iheyensis (strain DSM 14371 / CIP 107618 / JCM 11309 / KCTC 3954 / HTE831).